The following is a 131-amino-acid chain: Holo-[acyl-carrier-protein] synthase (131 aa).

Mg(2+) is bound by residues aspartate 8 and glutamate 62.

The protein belongs to the P-Pant transferase superfamily. AcpS family. The cofactor is Mg(2+).

The protein localises to the cytoplasm. The catalysed reaction is apo-[ACP] + CoA = holo-[ACP] + adenosine 3',5'-bisphosphate + H(+). In terms of biological role, transfers the 4'-phosphopantetheine moiety from coenzyme A to a Ser of acyl-carrier-protein. The chain is Holo-[acyl-carrier-protein] synthase from Delftia acidovorans (strain DSM 14801 / SPH-1).